A 54-amino-acid chain; its full sequence is UPF0057 membrane protein ssr1169 (54 aa).

The next 2 helical transmembrane spans lie at 3–23 and 31–51; these read IVKIICAILLPPLGVFLQVGI and LLLTIFGLYILGLVHAIWVIA.

Belongs to the UPF0057 (PMP3) family.

It is found in the cell membrane. The sequence is that of UPF0057 membrane protein ssr1169 from Synechocystis sp. (strain ATCC 27184 / PCC 6803 / Kazusa).